The following is a 430-amino-acid chain: Histidinol dehydrogenase (430 aa).

Residues tyrosine 129, glutamine 190, and asparagine 213 each coordinate NAD(+). Substrate-binding residues include serine 236, glutamine 258, and histidine 261. Zn(2+) contacts are provided by glutamine 258 and histidine 261. Active-site proton acceptor residues include glutamate 326 and histidine 327. Residues histidine 327, aspartate 360, glutamate 414, and histidine 419 each coordinate substrate. Zn(2+) is bound at residue aspartate 360. Residue histidine 419 coordinates Zn(2+).

Belongs to the histidinol dehydrogenase family. Requires Zn(2+) as cofactor.

It carries out the reaction L-histidinol + 2 NAD(+) + H2O = L-histidine + 2 NADH + 3 H(+). Its pathway is amino-acid biosynthesis; L-histidine biosynthesis; L-histidine from 5-phospho-alpha-D-ribose 1-diphosphate: step 9/9. Its function is as follows. Catalyzes the sequential NAD-dependent oxidations of L-histidinol to L-histidinaldehyde and then to L-histidine. This is Histidinol dehydrogenase from Gluconobacter oxydans (strain 621H) (Gluconobacter suboxydans).